Reading from the N-terminus, the 200-residue chain is Small ribosomal subunit protein eS1 (200 aa).

It belongs to the eukaryotic ribosomal protein eS1 family. As to quaternary structure, part of the 30S ribosomal subunit.

This Thermococcus kodakarensis (strain ATCC BAA-918 / JCM 12380 / KOD1) (Pyrococcus kodakaraensis (strain KOD1)) protein is Small ribosomal subunit protein eS1.